Reading from the N-terminus, the 401-residue chain is Steroid C26-monooxygenase (401 aa).

C343 contacts heme.

It belongs to the cytochrome P450 family. The cofactor is heme.

The catalysed reaction is cholest-4-en-3-one + 6 reduced [2Fe-2S]-[ferredoxin] + 3 O2 + 5 H(+) = (25R)-3-oxocholest-4-en-26-oate + 6 oxidized [2Fe-2S]-[ferredoxin] + 4 H2O. It functions in the pathway steroid metabolism; cholesterol degradation. Involved in the utilization of cholesterol as the sole carbon and energy source by degrading the side chain. Primarily catalyzes the sequential oxidation of the terminal methyl of cholest-4-en-3-one into (25R)-26-hydroxycholest-4-en-3-one (alcohol), (25R)-26-oxocholest-4-en-3-one (aldehyde), to finally yield the carboxylic acid (25R)-3-oxocholest-4-en-26-oate. Also able to sequentially oxidize cholesterol itself, not only cholest-4-en-3-one. This chain is Steroid C26-monooxygenase, found in Mycolicibacterium smegmatis (strain ATCC 700084 / mc(2)155) (Mycobacterium smegmatis).